The chain runs to 144 residues: Monooxygenase ptaG (144 aa).

The protein belongs to the avfA family.

It functions in the pathway secondary metabolite biosynthesis. In terms of biological role, monooxygenase; part of the gene cluster that mediates the biosynthesis of pestheic acid, a diphenyl ether which is a biosynthetic precursor of the unique chloropupukeananes. The biosynthesis initiates from condensation of acetate and malonate units catalyzed by the non-reducing PKS ptaA. As the ptaA protein is TE/CLC domain-deficient, hydrolysis and Claisen cyclization of the polyketide could be catalyzed by ptaB containing a beta-lactamase domain. The ptaB protein might hydrolyze the thioester bond between the ACP of ptaA and the intermediate to release atrochrysone carboxylic acid, which is spontaneously dehydrated to form endocrocin anthrone. Endocrocin anthrone is then converted to endocrocin, catalyzed by the anthrone oxygenase ptaC. Spontaneous decarboxylation of endocrocin occurs to generate emodin. An O-methyltransferase (ptaH or ptaI) could methylate emodin to form physcion. PtaJ could then catalyze the oxidative cleavage of physcion, and rotation of the intermediate could then afford desmethylisosulochrin. PtaF, a putative NADH-dependent oxidoreductase, might also participate in the oxidative cleavage step. Desmethylisosulochrin is then transformed by another O-methyltransferase (ptaH or ptaI) to form isosulochrin. Chlorination of isosulochrin by ptaM in the cyclohexadienone B ring then produces chloroisosulochrin. PtaE is responsible for the oxidative coupling reactions of both benzophenones isosulochrin and chloroisosulochrin to RES-1214-1 and pestheic acid respectively, regardless of chlorination. The polypeptide is Monooxygenase ptaG (Pestalotiopsis fici (strain W106-1 / CGMCC3.15140)).